The primary structure comprises 176 residues: Large ribosomal subunit protein bL17m (176 aa).

The N-terminal 8 residues, 1 to 8, are a transit peptide targeting the mitochondrion; that stretch reads MRLSLAAA.

This sequence belongs to the bacterial ribosomal protein bL17 family. As to quaternary structure, component of the mitochondrial ribosome large subunit (39S) which comprises a 16S rRNA and about 50 distinct proteins.

The protein resides in the mitochondrion. The chain is Large ribosomal subunit protein bL17m (Mrpl17) from Mus musculus (Mouse).